A 404-amino-acid chain; its full sequence is MAGRRAQTGSAPPRPAAPHPRPASRAFPQHCRPRDAERPPSPRSPLMPGCELPVGTCPDMCPAAERAQREREHRLHRLEVVPGCRQDPPRADPQRAVKEYSRPAAGKPRPPPSQLRPPSVLLATVRYLAGEVAESADIARAEVASFVADRLRAVLLDLALQGAGDAEAAVVLEAALATLLTVVARLGPDAARGPADPVLLQAQVQEGFGSLRRCYARGAGPHPRQPAFQGLFLLYNLGSVEALHEVLQLPAALRACPPLRKALAVDAAFREGNAARLFRLLQTLPYLPSCAVQCHVGHARREALARFARAFSTPKGQTLPLGFMVNLLALDGLREARDLCQAHGLPLDGEERVVFLRGRYVEEGLPPASTCKVLVESKLRGRTLEEVVMAEEEDEGTDRPGSPA.

Disordered regions lie at residues 1-58 (MAGR…GTCP) and 77-117 (RLEV…QLRP). Residues 12 to 21 (PPRPAAPHPR) show a composition bias toward pro residues. The segment covering 87–101 (DPPRADPQRAVKEYS) has biased composition (basic and acidic residues). In terms of domain architecture, PCI spans 203 to 379 (QVQEGFGSLR…TCKVLVESKL (177 aa)). Position 402 is a phosphoserine (S402).

It belongs to the SAC3 family. As to quaternary structure, may be part of a SEM1-containing complex.

The protein localises to the cytoplasm. The protein resides in the cytoskeleton. It localises to the microtubule organizing center. Its subcellular location is the centrosome. It is found in the spindle. Functionally, involved in centrosome duplication and mitotic progression. The sequence is that of SAC3 domain-containing protein 1 (SAC3D1) from Homo sapiens (Human).